Consider the following 61-residue polypeptide: Opistoporin-4 (61 aa).

Positions 45-61 (EAGQMPFDEFMDILHYY) are excised as a propeptide.

The protein belongs to the non-disulfide-bridged peptide (NDBP) superfamily. Long chain multifunctional peptide (group 2) family. In terms of tissue distribution, expressed by the venom gland.

Its subcellular location is the secreted. The protein localises to the target cell membrane. Its function is as follows. At high concentrations, acts as a pore former in cellular membranes and causes the leakage of the cells. At submicromolar concentrations, degranulates granulocytes and has a weak hemolytic activity against human erythrocytes. Also strongly inhibits the production of superoxide anions. Has a strong antibacterial activity against Gram-negative bacteria but is less active against Gram-positive bacteria. Also has antifungal activity. The sequence is that of Opistoporin-4 from Opistophthalmus carinatus (African yellow leg scorpion).